The primary structure comprises 812 residues: MSNPVSINNSGSISNSNLNNESLSPSRLSSSPNSKSMELNGKRTLKSSVVKTLLNRSSSGNNLNNTVTTRRAAGSFTSNYQNIYTPNNNSYNSSNNNNNNNNDDDTVSVDGDNPPDSPKSTKDHSNSVGSNSGGGGGGSSGGLNMSMNNIKQQQQDNLIKQQQKDRSLWTVRSLKEHAEVLDIMERLKPVNRAISFGQIYAREETQFDFDPLIGRDTMLQLILQHLQFEGLMDSRKLLEEEARVQYPEYAINESRLVTLLRTALKDSERVFQLTLDDKKRDSQQQLEEHLAFLGLFKDETATDIMGEDVNIYDEPENSNIIYVDDKEKEKEKEKEKEKEKDKFGPNSTNSLSGSGSSPNIPSGMNNNSSSIGNNSIGNSNSYSNGELSPLSASTLLMMSPQNKNSIETNKPQVKAASLNKLVILLTPDNNHDLEYTKTFLLTYQSFTTPEMLLEKLVQRYHVPQKPGQSLDDWKKSAVPIQLRVANVIRTWIKDYFSDFNDKLIQNVKSLYENMKQSGNMSHAKILSESLNAKIKGMVGMDDQKRAPTFTSPAPEPKVPKNIWSQTLDIFSVDEEEIARQLTLMDFEIFSAIKSTELLNQSWNKPKLRHRSPNVLTLINRFNEISQWTATSILSYPKVKDRARIMAKFIKIAEYCMRHLNNFNTSMAILSGLNASSVHRLKFTKEELPKHTQQVYTELQFHLSSAQAYKEYRALLAKANPPCLPYLGVYLTDLTFFEEGNPDFIQGFINFGKRKLIYGSISNVQSFQNAKYNLQPVYQITKLLKGFKLLEENDLYSRSMSFEPRNKERSEIL.

2 stretches are compositionally biased toward low complexity: residues 1-36 (MSNPVSINNSGSISNSNLNNESLSPSRLSSSPNSKS) and 53-65 (LLNRSSSGNNLNN). The tract at residues 1–146 (MSNPVSINNS…GGSSGGLNMS (146 aa)) is disordered. Residues 75 to 86 (SFTSNYQNIYTP) are compositionally biased toward polar residues. Residues 87 to 101 (NNNSYNSSNNNNNNN) are compositionally biased toward low complexity. Positions 131-141 (NSGGGGGGSSG) are enriched in gly residues. In terms of domain architecture, LisH spans 214 to 246 (GRDTMLQLILQHLQFEGLMDSRKLLEEEARVQY). The tract at residues 320-382 (IIYVDDKEKE…NNSIGNSNSY (63 aa)) is disordered. Over residues 323 to 343 (VDDKEKEKEKEKEKEKEKDKF) the composition is skewed to basic and acidic residues. Residues 344–382 (GPNSTNSLSGSGSSPNIPSGMNNNSSSIGNNSIGNSNSY) are compositionally biased toward low complexity. Positions 409–535 (NKPQVKAASL…LSESLNAKIK (127 aa)) constitute an N-terminal Ras-GEF domain. Residues 573–804 (DEEEIARQLT…YSRSMSFEPR (232 aa)) form the Ras-GEF domain.

Promotes the exchange of Ras-bound GDP by GTP. In Dictyostelium discoideum (Social amoeba), this protein is Ras guanine nucleotide exchange factor J (gefJ).